Consider the following 257-residue polypeptide: Triosephosphate isomerase (257 aa).

Residue 9–11 (NWK) participates in substrate binding. Residue histidine 95 is the Electrophile of the active site. Glutamate 168 acts as the Proton acceptor in catalysis. Residues glycine 174, serine 213, and 234-235 (GG) contribute to the substrate site.

It belongs to the triosephosphate isomerase family. As to quaternary structure, homodimer.

The protein localises to the cytoplasm. The enzyme catalyses D-glyceraldehyde 3-phosphate = dihydroxyacetone phosphate. Its pathway is carbohydrate biosynthesis; gluconeogenesis. It participates in carbohydrate degradation; glycolysis; D-glyceraldehyde 3-phosphate from glycerone phosphate: step 1/1. Involved in the gluconeogenesis. Catalyzes stereospecifically the conversion of dihydroxyacetone phosphate (DHAP) to D-glyceraldehyde-3-phosphate (G3P). This chain is Triosephosphate isomerase, found in Acidithiobacillus ferrooxidans (strain ATCC 23270 / DSM 14882 / CIP 104768 / NCIMB 8455) (Ferrobacillus ferrooxidans (strain ATCC 23270)).